Reading from the N-terminus, the 334-residue chain is Putative transport protein MJ1177 (334 aa).

7 helical membrane passes run 13 to 33 (VIVG…DVLA), 61 to 81 (LAIS…LLTF), 138 to 158 (IIDV…TFYF), 191 to 211 (SYKN…ILSY), 234 to 254 (LLPI…FFLI), 259 to 279 (KAVF…DFVI), and 293 to 313 (VLVV…GFAI).

The protein belongs to the autoinducer-2 exporter (AI-2E) (TC 2.A.86) family.

It is found in the cell membrane. The protein is Putative transport protein MJ1177 of Methanocaldococcus jannaschii (strain ATCC 43067 / DSM 2661 / JAL-1 / JCM 10045 / NBRC 100440) (Methanococcus jannaschii).